The chain runs to 694 residues: DNA-binding protein RFX2 (694 aa).

Positions 174 to 249 form a DNA-binding region, RFX-type winged-helix; that stretch reads HLQWLLDNYE…YHYYGIRLKP (76 aa). 2 disordered regions span residues 267–310 and 658–694; these read QQPI…QHHQ and KDDV…MQEM. Residues 289-299 are compositionally biased toward polar residues; the sequence is PANSSQHASPE. Residues 300 to 310 are compositionally biased toward low complexity; it reads QSVAAQSQHHQ.

This sequence belongs to the RFX family. Homodimer. Heterodimer; heterodimerizes with other rfx proteins. As to expression, preferentially expressed in ciliated tissues, such as neural tube, gastrocoel roof plate, epidermal multiciliated cells, otic vesicles and kidneys.

Its subcellular location is the nucleus. The protein resides in the cytoplasm. Transcription factor that acts as a key regulator of ciliogenesis. Specifically regulates expression of genes required for cilium assembly and function. Recognizes and binds the X-box, a regulatory motif with DNA sequence 5'-GTNRCC(0-3N)RGYAAC-3' present on promoters. Required for neural tube closure and neural ciliogenesis. This Xenopus laevis (African clawed frog) protein is DNA-binding protein RFX2 (rfx2).